Reading from the N-terminus, the 652-residue chain is Putative enzymatic polyprotein (652 aa).

Residues 21–99 (YHGLFDTGAN…SPDIIIGATF (79 aa)) enclose the Peptidase A2 domain. Aspartate 26 is a catalytic residue. A Reverse transcriptase domain is found at 231-413 (FIEEKTNFED…EKIDFLGVQI (183 aa)). Positions 301, 364, and 365 each coordinate Mg(2+).

It catalyses the reaction DNA(n) + a 2'-deoxyribonucleoside 5'-triphosphate = DNA(n+1) + diphosphate. The enzyme catalyses Endonucleolytic cleavage to 5'-phosphomonoester.. Encodes for at least two polypeptides: protease (PR) and reverse transcriptase (RT). The protease processes the polyprotein in cis. Reverse transcriptase is multifunctional enzyme that converts the viral RNA genome into dsDNA in viral cytoplasmic capsids. This enzyme displays a DNA polymerase activity that can copy either DNA or RNA templates, and a ribonuclease H (RNase H) activity that cleaves the RNA strand of RNA-DNA heteroduplexes in a partially processive 3'- to 5'-endonucleasic mode. Neo-synthesized pregenomic RNA (pgRNA) are encapsidated, and reverse-transcribed inside the nucleocapsid. Partial (+)DNA is synthesized from the (-)DNA template and generates the relaxed circular DNA (RC-DNA) genome. After budding and infection, the RC-DNA migrates in the nucleus, and is converted into a plasmid-like covalently closed circular DNA (cccDNA). The polypeptide is Putative enzymatic polyprotein (Cassava vein mosaic virus (CsVMV)).